Reading from the N-terminus, the 284-residue chain is Tropomyosin Por p 1.0101 (284 aa).

M1 is subject to N-acetylmethionine. Positions 1–21 (MDAIKKKMQAMKLEKDDAMDR) are disordered. Residues 1 to 280 (MDAIKKKMQA…TDELDQAFSE (280 aa)) adopt a coiled-coil conformation. Residues 12–21 (KLEKDDAMDR) show a composition bias toward basic and acidic residues.

This sequence belongs to the tropomyosin family. In terms of assembly, homodimer. Expressed in muscle (at protein level). Expressed in pincer muscles.

In terms of biological role, tropomyosin, in association with the troponin complex, plays a central role in the calcium dependent regulation of muscle contraction. The sequence is that of Tropomyosin Por p 1.0101 from Portunus pelagicus (Blue swimmer crab).